Consider the following 224-residue polypeptide: Uracil-DNA glycosylase (224 aa).

Residue Asp-64 is the Proton acceptor of the active site.

This sequence belongs to the uracil-DNA glycosylase (UDG) superfamily. UNG family.

The protein resides in the cytoplasm. It catalyses the reaction Hydrolyzes single-stranded DNA or mismatched double-stranded DNA and polynucleotides, releasing free uracil.. Its function is as follows. Excises uracil residues from the DNA which can arise as a result of misincorporation of dUMP residues by DNA polymerase or due to deamination of cytosine. This is Uracil-DNA glycosylase from Geobacillus sp. (strain WCH70).